The following is a 187-amino-acid chain: Orotate phosphoribosyltransferase (187 aa).

Residues Arg98, Lys99, Lys102, His104, and 128 to 136 each bind 5-phospho-alpha-D-ribose 1-diphosphate; that span reads EDVTTTGGS. The orotate site is built by Thr132 and Arg160.

This sequence belongs to the purine/pyrimidine phosphoribosyltransferase family. PyrE subfamily. In terms of assembly, homodimer. Mg(2+) is required as a cofactor.

The catalysed reaction is orotidine 5'-phosphate + diphosphate = orotate + 5-phospho-alpha-D-ribose 1-diphosphate. Its pathway is pyrimidine metabolism; UMP biosynthesis via de novo pathway; UMP from orotate: step 1/2. In terms of biological role, catalyzes the transfer of a ribosyl phosphate group from 5-phosphoribose 1-diphosphate to orotate, leading to the formation of orotidine monophosphate (OMP). In Bradyrhizobium diazoefficiens (strain JCM 10833 / BCRC 13528 / IAM 13628 / NBRC 14792 / USDA 110), this protein is Orotate phosphoribosyltransferase.